Here is a 339-residue protein sequence, read N- to C-terminus: Anthranilate phosphoribosyltransferase (339 aa).

5-phospho-alpha-D-ribose 1-diphosphate contacts are provided by residues Gly-79, 82–83 (GD), Ser-87, 89–92 (NIST), 107–115 (KHGNRSISS), and Ser-119. Residue Gly-79 participates in anthranilate binding. Mg(2+) is bound at residue Ser-91. Asn-110 is an anthranilate binding site. Anthranilate is bound at residue Arg-165. 2 residues coordinate Mg(2+): Asp-224 and Glu-225.

It belongs to the anthranilate phosphoribosyltransferase family. As to quaternary structure, homodimer. Mg(2+) serves as cofactor.

It catalyses the reaction N-(5-phospho-beta-D-ribosyl)anthranilate + diphosphate = 5-phospho-alpha-D-ribose 1-diphosphate + anthranilate. Its pathway is amino-acid biosynthesis; L-tryptophan biosynthesis; L-tryptophan from chorismate: step 2/5. Catalyzes the transfer of the phosphoribosyl group of 5-phosphorylribose-1-pyrophosphate (PRPP) to anthranilate to yield N-(5'-phosphoribosyl)-anthranilate (PRA). This Listeria innocua serovar 6a (strain ATCC BAA-680 / CLIP 11262) protein is Anthranilate phosphoribosyltransferase.